The sequence spans 166 residues: MTEPSSRRSGYARLLDRAIRILAMRDHSEQELRRKLVAPVMSKNGPEALDVTPDELEQVVAWCIENRYLDDNRFVGQFIASRSRKGYGPARIRQELSQKGIARQVVDQAMRECDIDWVSLAREQAQRKYGEPLPSAFTEKVKVQRFLLYRGYLMEDIQEIWRNFAD.

The protein belongs to the RecX family.

The protein localises to the cytoplasm. Modulates RecA activity. This Klebsiella pneumoniae subsp. pneumoniae (strain ATCC 700721 / MGH 78578) protein is Regulatory protein RecX.